A 197-amino-acid chain; its full sequence is UPF0251 protein CT1277 (197 aa).

A disordered region spans residues 138-197 (GGGFGGGRRGGGKCRGFRSGLDRGPGHGEGRCQGEGHGNGNGNGNGQGRMRRNQQEGGEV). Residues 157–171 (GLDRGPGHGEGRCQG) show a composition bias toward basic and acidic residues. Residues 172–184 (EGHGNGNGNGNGQ) show a composition bias toward gly residues.

The protein belongs to the UPF0251 family.

This Chlorobaculum tepidum (strain ATCC 49652 / DSM 12025 / NBRC 103806 / TLS) (Chlorobium tepidum) protein is UPF0251 protein CT1277.